Consider the following 365-residue polypeptide: DNA replication and repair protein RecF (365 aa).

30-37 lines the ATP pocket; that stretch reads GLNGSGKT.

This sequence belongs to the RecF family.

The protein localises to the cytoplasm. Its function is as follows. The RecF protein is involved in DNA metabolism; it is required for DNA replication and normal SOS inducibility. RecF binds preferentially to single-stranded, linear DNA. It also seems to bind ATP. This chain is DNA replication and repair protein RecF, found in Cellvibrio japonicus (strain Ueda107) (Pseudomonas fluorescens subsp. cellulosa).